The following is a 219-amino-acid chain: ADP-sugar pyrophosphatase (219 aa).

The residue at position 1 (methionine 1) is an N-acetylmethionine. Phosphoserine is present on residues serine 3 and serine 10. Substrate is bound at residue tryptophan 28. Lysine 42 participates in a covalent cross-link: Glycyl lysine isopeptide (Lys-Gly) (interchain with G-Cter in SUMO2). A Phosphothreonine modification is found at threonine 45. Substrate-binding positions include 46–47 (WE) and arginine 51. Residues 57-197 (QTADGVAVIP…EEHLTVDARV (141 aa)) enclose the Nudix hydrolase domain. Phosphotyrosine is present on tyrosine 74. Residue arginine 84 coordinates substrate. Alanine 96 is a binding site for Mg(2+). Positions 97 to 118 (GLIDDGETPEAAALRELEEETG) match the Nudix box motif. Leucine 98 lines the substrate pocket. Mg(2+) contacts are provided by glutamate 112 and glutamate 116. Aspartate 133 serves as a coordination point for substrate. Glutamate 166 serves as a coordination point for Mg(2+). Residues lysine 210 and lysine 218 each carry the N6-acetyllysine modification.

Belongs to the Nudix hydrolase family. As to quaternary structure, homodimer. Interacts with PARG. Mg(2+) is required as a cofactor. Post-translationally, phosphorylation at Thr-45 is required for homodimer stability; dephosphorylation results in destabilization of the homodimer. Dephosphorylation at Thr-45 promotes the ATP-synthesis activity. As to expression, widely expressed. Most abundant in liver.

Its subcellular location is the nucleus. The catalysed reaction is D-ribose 5-phosphate + ATP + H(+) = ADP-D-ribose + diphosphate. It carries out the reaction ADP-D-ribose + H2O = D-ribose 5-phosphate + AMP + 2 H(+). The enzyme catalyses 8-oxo-dGDP + H2O = 8-oxo-dGMP + phosphate + H(+). In terms of biological role, enzyme that can either act as an ADP-sugar pyrophosphatase in absence of diphosphate or catalyze the synthesis of ATP in presence of diphosphate. In absence of diphosphate, hydrolyzes with similar activities various modified nucleoside diphosphates such as ADP-ribose, ADP-mannose, ADP-glucose, 8-oxo-GDP and 8-oxo-dGDP. Can also hydrolyze other nucleotide sugars with low activity. In presence of diphosphate, mediates the synthesis of ATP in the nucleus by catalyzing the conversion of ADP-ribose to ATP and ribose 5-phosphate. Nuclear ATP synthesis takes place when dephosphorylated at Thr-45. Nuclear ATP generation is required for extensive chromatin remodeling events that are energy-consuming. Does not play a role in U8 snoRNA decapping activity. Binds U8 snoRNA. In Homo sapiens (Human), this protein is ADP-sugar pyrophosphatase (NUDT5).